Here is a 241-residue protein sequence, read N- to C-terminus: Proteasome subunit alpha (241 aa).

It belongs to the peptidase T1A family. As to quaternary structure, the 20S proteasome core is composed of 14 alpha and 14 beta subunits that assemble into four stacked heptameric rings, resulting in a barrel-shaped structure. The two inner rings, each composed of seven catalytic beta subunits, are sandwiched by two outer rings, each composed of seven alpha subunits. The catalytic chamber with the active sites is on the inside of the barrel. Has a gated structure, the ends of the cylinder being occluded by the N-termini of the alpha-subunits. Is capped at one or both ends by the proteasome regulatory ATPase, PAN.

The protein resides in the cytoplasm. The formation of the proteasomal ATPase PAN-20S proteasome complex, via the docking of the C-termini of PAN into the intersubunit pockets in the alpha-rings, triggers opening of the gate for substrate entry. Interconversion between the open-gate and close-gate conformations leads to a dynamic regulation of the 20S proteasome proteolysis activity. Functionally, component of the proteasome core, a large protease complex with broad specificity involved in protein degradation. The polypeptide is Proteasome subunit alpha (Methanosphaerula palustris (strain ATCC BAA-1556 / DSM 19958 / E1-9c)).